The chain runs to 240 residues: tRNA (guanine-N(1)-)-methyltransferase (240 aa).

Residues glycine 110 and 130–135 contribute to the S-adenosyl-L-methionine site; that span reads VGDYVL.

It belongs to the RNA methyltransferase TrmD family. In terms of assembly, homodimer.

The protein localises to the cytoplasm. It carries out the reaction guanosine(37) in tRNA + S-adenosyl-L-methionine = N(1)-methylguanosine(37) in tRNA + S-adenosyl-L-homocysteine + H(+). Functionally, specifically methylates guanosine-37 in various tRNAs. The polypeptide is tRNA (guanine-N(1)-)-methyltransferase (Borrelia recurrentis (strain A1)).